A 105-amino-acid chain; its full sequence is Ig lambda-1 chain C region (105 aa).

One can recognise an Ig-like domain in the interval 6 to 100; sequence PSVTLFPPSS…EGHTVEKSLS (95 aa). Residues Cys27 and Cys86 are joined by a disulfide bond.

The chain is Ig lambda-1 chain C region from Mus musculus (Mouse).